We begin with the raw amino-acid sequence, 322 residues long: Replication factor C small subunit (322 aa).

46–53 is an ATP binding site; it reads GSAGIGKT.

This sequence belongs to the activator 1 small subunits family. RfcS subfamily. Heteromultimer composed of small subunits (RfcS) and large subunits (RfcL).

In terms of biological role, part of the RFC clamp loader complex which loads the PCNA sliding clamp onto DNA. The sequence is that of Replication factor C small subunit from Methanoculleus marisnigri (strain ATCC 35101 / DSM 1498 / JR1).